A 614-amino-acid polypeptide reads, in one-letter code: Beta-glucosidase 33 (614 aa).

An N-terminal signal peptide occupies residues 1 to 26 (MATATLTLFLGLLALTSTILSFNADA). A beta-D-glucoside is bound by residues Q113, H217, and 262–263 (NE). Catalysis depends on E263, which acts as the Proton donor. A disulfide bond links C282 and C290. N344 is a glycosylation site (N-linked (GlcNAc...) asparagine). Y407 is an a beta-D-glucoside binding site. N-linked (GlcNAc...) asparagine glycosylation is found at N419, N432, and N439. E479 is a binding site for a beta-D-glucoside. E479 serves as the catalytic Nucleophile. The N-linked (GlcNAc...) asparagine glycan is linked to N491. A beta-D-glucoside is bound by residues W529, 536-537 (EW), and F545.

It belongs to the glycosyl hydrolase 1 family.

It catalyses the reaction Hydrolysis of terminal, non-reducing beta-D-glucosyl residues with release of beta-D-glucose.. This Arabidopsis thaliana (Mouse-ear cress) protein is Beta-glucosidase 33.